A 321-amino-acid chain; its full sequence is tRNA pseudouridine synthase B (321 aa).

Residue Asp-47 is the Nucleophile of the active site.

The protein belongs to the pseudouridine synthase TruB family. Type 1 subfamily.

It catalyses the reaction uridine(55) in tRNA = pseudouridine(55) in tRNA. Responsible for synthesis of pseudouridine from uracil-55 in the psi GC loop of transfer RNAs. The chain is tRNA pseudouridine synthase B from Shewanella baltica (strain OS223).